Here is a 475-residue protein sequence, read N- to C-terminus: Probable L-cysteine desulfhydrase, chloroplastic (475 aa).

The transit peptide at 1 to 24 (MASSLSPPEEASYHHRHTKRYTSS) directs the protein to the chloroplast. The tract at residues 1–40 (MASSLSPPEEASYHHRHTKRYTSSASSASSTTNGTVESSV) is disordered. A compositionally biased stretch (low complexity) spans 22-32 (TSSASSASSTT). Lys284 bears the N6-(pyridoxal phosphate)lysine mark.

Belongs to the class-V pyridoxal-phosphate-dependent aminotransferase family. In terms of assembly, interacts in vitro with QS.

The protein localises to the plastid. Its subcellular location is the chloroplast. Its function is as follows. May catalyze the production of hydrogen sulfide (H2S) from cysteine. In Arabidopsis thaliana (Mouse-ear cress), this protein is Probable L-cysteine desulfhydrase, chloroplastic.